The chain runs to 676 residues: Ribosome quality control complex subunit TCF25 (676 aa).

Disordered regions lie at residues 1 to 59 and 85 to 147; these read MSRR…VRVN and LTDA…ENGL. The span at 123 to 136 shows a compositional bias: basic residues; the sequence is GKLRKKKKKQKNKK. Phosphoserine is present on Ser-602.

Belongs to the TCF25 family. In terms of assembly, component of the ribosome quality control complex (RQC), composed of the E3 ubiquitin ligase LTN1, TCF25 and NEMF associated with the 60S ribosomal subunit. Interacts (via C-terminus) with NFATC4; the interaction leads to suppresson of NFATC4 transcription factor activity and is reduced following stimulation with angiotensin-2. Interacts with XIAP. In the embryo, widely expressed with highest levels in brain. In the adult, highest expression is found in the heart. Repressed in cardiac tissue of patients with heart failure (at protein level). mRNA levels in the heart are unchanged in patients with heart failure.

Its subcellular location is the nucleus. It localises to the cytoplasm. The protein resides in the cytosol. Functionally, component of the ribosome quality control complex (RQC), a ribosome-associated complex that mediates ubiquitination and extraction of incompletely synthesized nascent chains for proteasomal degradation. In the RQC complex, required to promote formation of 'Lys-48'-linked polyubiquitin chains during ubiquitination of incompletely synthesized proteins by LTN1. May negatively regulate the calcineurin-NFAT signaling cascade by suppressing the activity of transcription factor NFATC4. May play a role in cell death control. This chain is Ribosome quality control complex subunit TCF25, found in Homo sapiens (Human).